The following is a 191-amino-acid chain: GDP-mannose pyrophosphatase (191 aa).

Residues Tyr17, 38–40 (KRE), Arg67, and 85–87 (AGL) each bind GDP-alpha-D-mannose. Residues 43–180 (DRGNGATILL…EIRDGKTVLL (138 aa)) form the Nudix hydrolase domain. 3 residues coordinate Mg(2+): Ala85, Glu100, and Glu104. The Nudix box signature appears at 86-106 (GLLDNDEPEVCIRKEAIEETG). GDP-alpha-D-mannose-binding positions include Glu104, Glu127, 150–151 (DE), and Lys176. Glu151 is a Mg(2+) binding site.

The protein belongs to the Nudix hydrolase family. NudK subfamily. Homodimer. Requires Mg(2+) as cofactor.

It catalyses the reaction GDP-alpha-D-mannose + H2O = alpha-D-mannose 1-phosphate + GMP + 2 H(+). Nucleoside diphosphate sugar hydrolase that hydrolyzes GDP-mannose as its preferred substrate, yielding GMP and mannose-1-phosphate. The sequence is that of GDP-mannose pyrophosphatase (nudK) from Escherichia coli (strain UTI89 / UPEC).